The primary structure comprises 204 residues: Large ribosomal subunit protein eL15 (204 aa).

It belongs to the eukaryotic ribosomal protein eL15 family. As to quaternary structure, component of the large ribosomal subunit.

It is found in the cytoplasm. In terms of biological role, component of the large ribosomal subunit. The ribosome is a large ribonucleoprotein complex responsible for the synthesis of proteins in the cell. The sequence is that of Large ribosomal subunit protein eL15 (rpl15) from Siniperca knerii (Big-eye mandarin fish).